The primary structure comprises 345 residues: Acetylserotonin O-methyltransferase (345 aa).

S-adenosyl-L-methionine is bound by residues Tyr-147, Trp-164, Asp-210, 235–237, and Arg-252; that span reads GDF. His-255 (proton donor/acceptor) is an active-site residue. Substrate-binding residues include Asp-256, Asn-302, and Gln-306.

This sequence belongs to the class I-like SAM-binding methyltransferase superfamily. Cation-independent O-methyltransferase family. In terms of assembly, homodimer. As to expression, expressed in the pineal gland (at protein level). Not detectable in retina, nor in liver.

It carries out the reaction N-acetylserotonin + S-adenosyl-L-methionine = melatonin + S-adenosyl-L-homocysteine + H(+). It participates in aromatic compound metabolism; melatonin biosynthesis; melatonin from serotonin: step 1/2. Functionally, catalyzes the transfer of a methyl group onto N-acetylserotonin, producing melatonin (N-acetyl-5-methoxytryptamine). The protein is Acetylserotonin O-methyltransferase (ASMT) of Bos taurus (Bovine).